Here is a 432-residue protein sequence, read N- to C-terminus: MTAGTLAHRPLLGCIADDFTGATDLANTLVRNGMRTVQTIGLPDVGAVQDIGEADALVVALKSRTIPAVEAVAQSLAALQWLRAQGCRQFVFKYCSTFDSTDAGNIGPVAEALLAALDSDFTIACPAFPENGRTIFRGHLFVGDALLNESGMEHHPLTPMTDASLVRVLQRQSKNKVGLLRYDAVARGAHATAERIAALRSDGVRMAIADAVSDADLFTLGEACANLPLITGGSGIALGLPENFRRAGLLPQRGDAASVPAIDGPGVVLAGSASRATNGQVARWLEQGRPALRIDPLALARGEAVADAALAFAAGHGEPVLIYATSSPDEVKAVQAELGVERAGHLVEQCLATVAAGLLARGTRRFVVAGGETSGAVVQALGVRALRIGAQIAPGVPATVTLDAKPLALALKSGNFGGPDFFDEALRQLGGH.

ATP is bound by residues His-155, Ser-272, Ala-324, Gly-344, Glu-348, 370-373 (GGET), and Gly-414.

The protein belongs to the four-carbon acid sugar kinase family.

The enzyme catalyses 3-dehydro-L-erythronate + ATP = 3-dehydro-4-O-phospho-L-erythronate + ADP + H(+). The catalysed reaction is 3-dehydro-D-erythronate + ATP = 3-dehydro-4-O-phospho-D-erythronate + ADP + H(+). Catalyzes the ATP-dependent phosphorylation of 3-oxo-tetronate to 3-oxo-tetronate 4-phosphate. This Cupriavidus necator (strain ATCC 17699 / DSM 428 / KCTC 22496 / NCIMB 10442 / H16 / Stanier 337) (Ralstonia eutropha) protein is 3-oxo-tetronate kinase.